The chain runs to 331 residues: ADP,ATP carrier protein 1, mitochondrial (331 aa).

Solcar repeat units follow at residues 29 to 122 (KNFA…FKRM), 134 to 226 (KWFG…LKPV), and 238 to 320 (ASFA…LQIL). 5 helical membrane-spanning segments follow: residues 31–58 (FAID…VKLL), 99–123 (TANV…KRMF), 132–152 (YWKW…SSLF), 202–223 (FNIS…YDSL), and 237–257 (FASF…SYPI). ADP contacts are provided by Arg-104 and Lys-116. Arg-261 contacts ADP. The segment at 261 to 266 (RRRMMM) is important for transport activity. Positions 261–266 (RRRMMM) match the Nucleotide carrier signature motif motif. A helical membrane pass occupies residues 297–317 (AGANILRAIAGAGVLSGYDQL).

Belongs to the mitochondrial carrier (TC 2.A.29) family. Monomer.

It localises to the mitochondrion inner membrane. It carries out the reaction ADP(in) + ATP(out) = ADP(out) + ATP(in). With respect to regulation, the matrix-open state (m-state) is inhibited by the membrane-permeable bongkrekic acid (BKA). The cytoplasmic-open state (c-state) is inhibited by the membrane-impermeable toxic inhibitor carboxyatractyloside (CATR). Its function is as follows. ADP:ATP antiporter that mediates import of ADP into the mitochondrial matrix for ATP synthesis, and export of ATP out to fuel the cell. Cycles between the cytoplasmic-open state (c-state) and the matrix-open state (m-state): operates by the alternating access mechanism with a single substrate-binding site intermittently exposed to either the cytosolic (c-state) or matrix (m-state) side of the inner mitochondrial membrane. The polypeptide is ADP,ATP carrier protein 1, mitochondrial (ANT-G1) (Triticum aestivum (Wheat)).